A 393-amino-acid polypeptide reads, in one-letter code: SEC12-like protein 2 (393 aa).

Ala-2 is modified (N-acetylalanine). Residues 2 to 367 (ANQSTETNQP…EQKGDKPGVR (366 aa)) are Cytoplasmic-facing. Residues 41 to 67 (EKSEDDDESSSSSSSSRSCIVLSGGGG) form a disordered region. Ser-43 is modified (phosphoserine). WD repeat units lie at residues 151-190 (RDVGQQLALAFNPEGSVLAAGAEDGTLRVFKWPSMNTLLN), 193-231 (QAHSSVKCLTFSESGQFLVSLGGPVCRVWDVNASAAVAS), 283-322 (IKKNSISAFNVSADGKLLAIGTLEGDVLILESTRMQTIQV), and 326-367 (AHLG…PGVR). The helical; Signal-anchor for type II membrane protein transmembrane segment at 368-388 (WWLLVLLIVLLYVVAYYYMKA) threads the bilayer. Residues 389–393 (KGIIP) are Lumenal-facing.

As to quaternary structure, interacts with BZIP28.

The protein localises to the endoplasmic reticulum membrane. Its subcellular location is the golgi apparatus. It localises to the cis-Golgi network membrane. Functionally, required for the formation or budding of transport vesicles from the ER. This chain is SEC12-like protein 2 (STL2P), found in Arabidopsis thaliana (Mouse-ear cress).